Reading from the N-terminus, the 79-residue chain is Large ribosomal subunit protein bL31 (79 aa).

Belongs to the bacterial ribosomal protein bL31 family. Type A subfamily. In terms of assembly, part of the 50S ribosomal subunit.

Binds the 23S rRNA. This chain is Large ribosomal subunit protein bL31 (rpmE), found in Rickettsia bellii (strain RML369-C).